The following is a 512-amino-acid chain: MAVAQELYSFPASKLDSFVAQWLQPTREWKEEVLETVQTVEQFLRQENFRGERGPAQDVRVLKVLKVGCFGNGTVLRSTTDVELVVFLSCFHSFQEEAKHHQAVLRLIQKRMSYCRDLLDLGLSNLSVIEEVPSSLIFTIQTRETWEPITVTIVPAFRALGPSCPNSAEVYVNLIKANGYPGNFSPSFSELQRSFVKHRPTKLKSLLRLVKHWYQQYVRDKCPRANLPPLYALELLTVYAWEAGTQEDSNFRLDEGLATVMELLQDHELLCIYWTKYYTLQHPVIERFVRRQLKGERPIILDPADPTHNVAQGYRWDIVAQRASQCLKQDCCYDDRDAPVPSWTVKRAPDIQVTVQQWGHPDLILWVNPYEPIKKLKEKIRLSRGYSGLQRLSFQEPGGQRQLIRSQCSLAYYGIFCDTQICLLDTISPEIQVFVKNPDGGSHAYAIHPLDFVLSLKQQIEDRQGLQSQEQQLEFQGRVLEDWFDFKSYGIQDSITIILSRKREGKAPSAPS.

Ubiquitin-like domains follow at residues Ile-351–Glu-430 and Ile-431–Ala-507.

Belongs to the 2-5A synthase family. Specifically interacts with the ligand binding domain of the thyroid receptor (TR). TRIP14 does not require the presence of thyroid hormone for its interaction. Binds MBD1.

It is found in the nucleus. The protein resides in the nucleolus. The protein localises to the cytoplasm. Its function is as follows. Does not have 2'-5'-OAS activity, but can bind double-stranded RNA. Displays antiviral activity via an alternative antiviral pathway independent of RNase L. The chain is 2'-5'-oligoadenylate synthase-like protein 1 (Oasl) from Rattus norvegicus (Rat).